A 229-amino-acid polypeptide reads, in one-letter code: Small ribosomal subunit protein uS3 (229 aa).

One can recognise a KH type-2 domain in the interval 39 to 107; that stretch reads VRKFLEKKLK…PAQINIAEIR (69 aa).

It belongs to the universal ribosomal protein uS3 family. As to quaternary structure, part of the 30S ribosomal subunit. Forms a tight complex with proteins S10 and S14.

Its function is as follows. Binds the lower part of the 30S subunit head. Binds mRNA in the 70S ribosome, positioning it for translation. The chain is Small ribosomal subunit protein uS3 from Shewanella loihica (strain ATCC BAA-1088 / PV-4).